The following is an 81-amino-acid chain: Large ribosomal subunit protein bL31B (81 aa).

The protein belongs to the bacterial ribosomal protein bL31 family. Type B subfamily. As to quaternary structure, part of the 50S ribosomal subunit.

The polypeptide is Large ribosomal subunit protein bL31B (Bacillus cereus (strain ATCC 10987 / NRS 248)).